A 181-amino-acid chain; its full sequence is Insulin-like growth factor 2 (181 aa).

The N-terminal stretch at 1-24 is a signal peptide; the sequence is MGIPMRKPLLVLLVFLALASCCYA. Positions 25–52 are b; it reads AYRPSETLCGGELVDTLQFVCGDRGFYF. 3 cysteine pairs are disulfide-bonded: cysteine 33-cysteine 71, cysteine 45-cysteine 84, and cysteine 70-cysteine 75. Positions 53–64 are c; it reads SRPASRVNRRSR. The interval 65-85 is a; sequence GIVEECCFRSCDLALLETYCA. The interval 86 to 91 is d; sequence TPAKSE. Positions 92–181 are cleaved as a propeptide — e peptide; sequence RDVSTPPTVL…ASPEASGHRK (90 aa). The segment at 151–181 is disordered; sequence EAKRHRPLTARPTRDPAAHGGASPEASGHRK. An O-linked (GalNAc...) threonine glycan is attached at threonine 163.

It belongs to the insulin family. Interacts with MYORG; this interaction is required for IGF2 secretion. Interacts with integrins ITGAV:ITGB3 and ITGA6:ITGB4; integrin-binding is required for IGF2 signaling. Interacts with IGFBP2. In terms of processing, proteolytically processed by PCSK4, proIGF2 is cleaved at Arg-128 and Arg-92 to generate big-IGF2 and mature IGF2.

It localises to the secreted. In terms of biological role, the insulin-like growth factors possess growth-promoting activity. Major fetal growth hormone in mammals. Plays a key role in regulating fetoplacental development. IGF2 is influenced by placental lactogen. Also involved in tissue differentiation. In adults, involved in glucose metabolism in adipose tissue, skeletal muscle and liver. Acts as a ligand for integrin which is required for IGF2 signaling. Positively regulates myogenic transcription factor MYOD1 function by facilitating the recruitment of transcriptional coactivators, thereby controlling muscle terminal differentiation. Inhibits myoblast differentiation and modulates metabolism via increasing the mitochondrial respiration rate. Functionally, preptin undergoes glucose-mediated co-secretion with insulin, and acts as a physiological amplifier of glucose-mediated insulin secretion. Exhibits osteogenic properties by increasing osteoblast mitogenic activity through phosphoactivation of MAPK1 and MAPK3. This chain is Insulin-like growth factor 2, found in Sus scrofa (Pig).